Reading from the N-terminus, the 251-residue chain is Triosephosphate isomerase (251 aa).

9 to 11 (NWK) lines the substrate pocket. His95 (electrophile) is an active-site residue. The active-site Proton acceptor is Glu167. Substrate contacts are provided by residues Gly173, Ser212, and 233 to 234 (GG).

The protein belongs to the triosephosphate isomerase family. As to quaternary structure, homodimer.

The protein resides in the cytoplasm. The enzyme catalyses D-glyceraldehyde 3-phosphate = dihydroxyacetone phosphate. It functions in the pathway carbohydrate biosynthesis; gluconeogenesis. Its pathway is carbohydrate degradation; glycolysis; D-glyceraldehyde 3-phosphate from glycerone phosphate: step 1/1. Functionally, involved in the gluconeogenesis. Catalyzes stereospecifically the conversion of dihydroxyacetone phosphate (DHAP) to D-glyceraldehyde-3-phosphate (G3P). This is Triosephosphate isomerase from Pseudomonas putida (strain W619).